The primary structure comprises 239 residues: Increased recombination centers protein 22-1 (239 aa).

Residues 1 to 19 form the signal peptide; sequence MKLSTIFTAFAATIATVAG. Residues 20-161 lie on the Lumenal side of the membrane; the sequence is YETTGSKQTV…AAVSFFDPRL (142 aa). Residues 162–182 form a helical membrane-spanning segment; that stretch reads IFLELVLLITFAGLIYVGYEI. The Cytoplasmic segment spans residues 183–239; it reads WGKQYFKGVASVKAKKVSAAKASSPVASGPSTTSATGYDTNWIPESHLKQKKTKKVN. Residues 201–213 are compositionally biased toward low complexity; it reads AAKASSPVASGPS. The tract at residues 201-222 is disordered; the sequence is AAKASSPVASGPSTTSATGYDT.

It belongs to the IRC22 family.

It localises to the endoplasmic reticulum membrane. In terms of biological role, is probably involved in a pathway contributing to genomic integrity. This Candida albicans (strain WO-1) (Yeast) protein is Increased recombination centers protein 22-1 (IRC22-1).